Reading from the N-terminus, the 293-residue chain is Small ribosomal subunit protein uS5 (293 aa).

Residues 1–55 (MADDAGAAGGPGGPGGPGLGGRGGFRGGFGSGLRGRGRGRGRGRGRGRGARGGKA) are disordered. An N-acetylalanine modification is found at Ala2. Positions 7–34 (AAGGPGGPGGPGLGGRGGFRGGFGSGLR) are enriched in gly residues. 14 consecutive repeat copies span residues 9–11 (GGP), 12–14 (GGP), 15–17 (GGP), 22–25 (RGGF), 26–29 (RGGF), 34–35 (RG), 36–37 (RG), 38–39 (RG), 40–41 (RG), 42–43 (RG), 44–45 (RG), 46–47 (RG), 48–49 (RG), and 51–52 (RG). The 3 X 3 AA tandem repeats of G-G-P stretch occupies residues 9-17 (GGPGGPGGP). Positions 22–29 (RGGFRGGF) are 2 X 4 AA tandem repeats of R-G-G-F. The interval 34-52 (RGRGRGRGRGRGRGRGARG) is 9 X 2 AA tandem repeats of R-G. The span at 35–51 (GRGRGRGRGRGRGRGAR) shows a compositional bias: basic residues. Residues Lys54 and Lys58 each participate in a glycyl lysine isopeptide (Lys-Gly) (interchain with G-Cter in ubiquitin) cross-link. Positions 102-165 (LKDEVLKIMP…ILAKLSIVPV (64 aa)) constitute an S5 DRBM domain. The residue at position 252 (Thr252) is a Phosphothreonine. The residue at position 263 (Lys263) is an N6-acetyllysine. Ser264 is subject to Phosphoserine. The residue at position 270 (Thr270) is a Phosphothreonine. At Lys275 the chain carries N6-acetyllysine; alternate. Residue Lys275 forms a Glycyl lysine isopeptide (Lys-Gly) (interchain with G-Cter in SUMO1); alternate linkage. A Glycyl lysine isopeptide (Lys-Gly) (interchain with G-Cter in SUMO2); alternate cross-link involves residue Lys275. Lys275 is covalently cross-linked (Glycyl lysine isopeptide (Lys-Gly) (interchain with G-Cter in ubiquitin); alternate). Ser281 is modified (phosphoserine).

This sequence belongs to the universal ribosomal protein uS5 family. In terms of assembly, component of the small ribosomal subunit. Interacts with zinc finger protein ZNF277 (via zinc-finger domains); the interaction is direct; the interaction is extra-ribosomal. Interaction with ZNF277 competes with the binding of RPS2 to protein arginine methyltransferase PRMT3. In terms of processing, citrullinated by PADI4 in the Arg/Gly-rich region. Asymmetric arginine dimethylation by PRMT3 occurs at multiple sites in the Arg/Gly-rich region. Post-translationally, monoubiquitinated at Lys-54 and Lys-58 by RNF10 when a ribosome has stalled during translation, leading to its degradation by the proteasome. Deubiquitinated at Lys-54 and Lys-58 by USP10, preventing degradation by the proteasome and promoting 40S ribosome subunit recycling following ribosome dissociation.

Its subcellular location is the cytoplasm. It localises to the nucleus. The protein resides in the nucleolus. Its function is as follows. Component of the ribosome, a large ribonucleoprotein complex responsible for the synthesis of proteins in the cell. The small ribosomal subunit (SSU) binds messenger RNAs (mRNAs) and translates the encoded message by selecting cognate aminoacyl-transfer RNA (tRNA) molecules. The large subunit (LSU) contains the ribosomal catalytic site termed the peptidyl transferase center (PTC), which catalyzes the formation of peptide bonds, thereby polymerizing the amino acids delivered by tRNAs into a polypeptide chain. The nascent polypeptides leave the ribosome through a tunnel in the LSU and interact with protein factors that function in enzymatic processing, targeting, and the membrane insertion of nascent chains at the exit of the ribosomal tunnel. Plays a role in the assembly and function of the 40S ribosomal subunit. Mutations in this protein affects the control of translational fidelity. Involved in nucleolar processing of pre-18S ribosomal RNA and ribosome assembly. The chain is Small ribosomal subunit protein uS5 (Rps2) from Rattus norvegicus (Rat).